A 287-amino-acid polypeptide reads, in one-letter code: tRNA uridine(34) hydroxylase (287 aa).

Residues 132-226 (QGRPVVMLDT…YFEEVGGAHY (95 aa)) form the Rhodanese domain. C186 serves as the catalytic Cysteine persulfide intermediate.

It belongs to the TrhO family.

It catalyses the reaction uridine(34) in tRNA + AH2 + O2 = 5-hydroxyuridine(34) in tRNA + A + H2O. In terms of biological role, catalyzes oxygen-dependent 5-hydroxyuridine (ho5U) modification at position 34 in tRNAs. The protein is tRNA uridine(34) hydroxylase of Paraburkholderia phytofirmans (strain DSM 17436 / LMG 22146 / PsJN) (Burkholderia phytofirmans).